The following is a 468-amino-acid chain: Shaggy-related protein kinase theta (468 aa).

2 disordered regions span residues M1–T53 and H91–E112. One can recognise a Protein kinase domain in the interval Y134–F418. ATP is bound by residues V140–V148 and K163. D259 (proton acceptor) is an active-site residue. Y294 carries the phosphotyrosine modification.

It belongs to the protein kinase superfamily. CMGC Ser/Thr protein kinase family. GSK-3 subfamily. Autophosphorylated mainly on threonine and serine residues. In developing pollen.

It carries out the reaction L-seryl-[protein] + ATP = O-phospho-L-seryl-[protein] + ADP + H(+). It catalyses the reaction L-threonyl-[protein] + ATP = O-phospho-L-threonyl-[protein] + ADP + H(+). Functionally, may mediate extracellular signals to regulate transcription in differentiating cells. The polypeptide is Shaggy-related protein kinase theta (Brassica napus (Rape)).